Here is a 770-residue protein sequence, read N- to C-terminus: Tripartite terminase subunit 1 (770 aa).

The C3H1-type zinc finger occupies 199 to 227; sequence CAICFEELCITANQGETLHRRLLGCICDH. 675-682 provides a ligand contact to ATP; the sequence is FTSVFHCG.

Belongs to the herpesviridae TRM1 protein family. Associates with TRM2 and TRM3 to form the tripartite terminase complex. Interacts with portal protein.

Its subcellular location is the host nucleus. In terms of biological role, component of the molecular motor that translocates viral genomic DNA in empty capsid during DNA packaging. Forms a tripartite terminase complex together with TRM2 and TRM3 in the host cytoplasm. Once the complex reaches the host nucleus, it interacts with the capsid portal vertex. This portal forms a ring in which genomic DNA is translocated into the capsid. TRM1 carries an endonuclease activity that plays an important role for the cleavage of concatemeric viral DNA into unit length genomes. The chain is Tripartite terminase subunit 1 from Varicella-zoster virus (strain Dumas) (HHV-3).